We begin with the raw amino-acid sequence, 156 residues long: Ribosome maturation factor RimP (156 aa).

It belongs to the RimP family.

The protein resides in the cytoplasm. Required for maturation of 30S ribosomal subunits. The chain is Ribosome maturation factor RimP from Treponema pallidum (strain Nichols).